Here is a 306-residue protein sequence, read N- to C-terminus: SPbeta prophage-derived uncharacterized protein YonG (306 aa).

In Bacillus subtilis (strain 168), this protein is SPbeta prophage-derived uncharacterized protein YonG (yonG).